Consider the following 72-residue polypeptide: Translation initiation factor IF-1 (72 aa).

An S1-like domain is found at 1-72; the sequence is MAKEEAIEIE…SKGRITYRYK (72 aa).

The protein belongs to the IF-1 family. As to quaternary structure, component of the 30S ribosomal translation pre-initiation complex which assembles on the 30S ribosome in the order IF-2 and IF-3, IF-1 and N-formylmethionyl-tRNA(fMet); mRNA recruitment can occur at any time during PIC assembly.

It is found in the cytoplasm. In terms of biological role, one of the essential components for the initiation of protein synthesis. Stabilizes the binding of IF-2 and IF-3 on the 30S subunit to which N-formylmethionyl-tRNA(fMet) subsequently binds. Helps modulate mRNA selection, yielding the 30S pre-initiation complex (PIC). Upon addition of the 50S ribosomal subunit IF-1, IF-2 and IF-3 are released leaving the mature 70S translation initiation complex. The sequence is that of Translation initiation factor IF-1 from Chlorobium luteolum (strain DSM 273 / BCRC 81028 / 2530) (Pelodictyon luteolum).